The sequence spans 334 residues: tRNA N6-adenosine threonylcarbamoyltransferase (334 aa).

2 residues coordinate Fe cation: histidine 112 and histidine 116. Residues 135-139 (VVSGG), aspartate 168, glycine 181, aspartate 185, and asparagine 274 each bind substrate. Position 303 (aspartate 303) interacts with Fe cation.

This sequence belongs to the KAE1 / TsaD family. Fe(2+) is required as a cofactor.

It is found in the cytoplasm. It catalyses the reaction L-threonylcarbamoyladenylate + adenosine(37) in tRNA = N(6)-L-threonylcarbamoyladenosine(37) in tRNA + AMP + H(+). In terms of biological role, required for the formation of a threonylcarbamoyl group on adenosine at position 37 (t(6)A37) in tRNAs that read codons beginning with adenine. Is involved in the transfer of the threonylcarbamoyl moiety of threonylcarbamoyl-AMP (TC-AMP) to the N6 group of A37, together with TsaE and TsaB. TsaD likely plays a direct catalytic role in this reaction. The protein is tRNA N6-adenosine threonylcarbamoyltransferase of Anaeromyxobacter dehalogenans (strain 2CP-1 / ATCC BAA-258).